The primary structure comprises 182 residues: DNA-directed RNA polymerase 30 kDa polypeptide (182 aa).

Residues 135 to 175 (STIRCVACKSNNTIPMILQTRSSDEEPTVRVVCKDCGKNFA) form a TFIIS-type zinc finger. The Zn(2+) site is built by Cys-139, Cys-142, Cys-167, and Cys-170.

The protein belongs to the poxviridae DNA-directed RNA polymerase 30 kDa subunit family. As to quaternary structure, this enzyme consists of at least eight subunits.

The enzyme catalyses RNA(n) + a ribonucleoside 5'-triphosphate = RNA(n+1) + diphosphate. In terms of biological role, DNA-dependent RNA polymerase catalyzes the transcription of DNA into RNA using the four ribonucleoside triphosphates as substrates. Rpo30 may have a role in RNA chain elongation. This chain is DNA-directed RNA polymerase 30 kDa polypeptide (RPO30), found in Fowlpox virus (strain NVSL) (FPV).